An 88-amino-acid chain; its full sequence is MPHLPELSKQEPSANTLVDNYRAKGEDLENSHHNNESRLAEGVHYDRNKAPALQEREKASTEKVNVEGGGASSSMVDNIRRGNPSGVA.

A disordered region spans residues 1–88; sequence MPHLPELSKQ…IRRGNPSGVA (88 aa). Basic and acidic residues predominate over residues 21–65; sequence YRAKGEDLENSHHNNESRLAEGVHYDRNKAPALQEREKASTEKVN.

Functionally, involved in osmoadaptation. This is an uncharacterized protein from Emericella nidulans (strain FGSC A4 / ATCC 38163 / CBS 112.46 / NRRL 194 / M139) (Aspergillus nidulans).